The chain runs to 295 residues: Ankyrin repeat and SOCS box protein 17 (295 aa).

The stretch at 146 to 176 is one ANK repeat; that stretch reads SGITPLLYVAQTRQSNILKILLQYGILEREK. One can recognise an SOCS box domain in the interval 232-295; the sequence is LGRRPIISNW…RLQKYLNLES (64 aa).

The protein belongs to the ankyrin SOCS box (ASB) family.

Its pathway is protein modification; protein ubiquitination. Its function is as follows. May be a substrate-recognition component of a SCF-like ECS (Elongin-Cullin-SOCS-box protein) E3 ubiquitin-protein ligase complex which mediates the ubiquitination and subsequent proteasomal degradation of target proteins. This Canis lupus familiaris (Dog) protein is Ankyrin repeat and SOCS box protein 17 (ASB17).